Reading from the N-terminus, the 563-residue chain is Delta-1-pyrroline-5-carboxylate dehydrogenase, mitochondrial (563 aa).

Residues 1 to 24 (MLLPAPALRRALLSRPWTGAGLRW) constitute a mitochondrion transit peptide. At K31 the chain carries N6-succinyllysine. S44 carries the phosphoserine modification. K52 is subject to N6-acetyllysine. N6-acetyllysine; alternate occurs at positions 93, 99, 114, 130, and 175. 5 positions are modified to N6-succinyllysine; alternate: K93, K99, K114, K130, and K175. NAD(+) contacts are provided by residues S208, K233, and 286 to 290 (GSVPT). Residue E314 is the Proton acceptor of the active site. K318 is modified (N6-acetyllysine). The residue at position 347 (K347) is an N6-succinyllysine. The active-site Nucleophile is C348. Residues K365 and K376 each carry the N6-acetyllysine modification. An N6-succinyllysine modification is found at K395. E447 serves as a coordination point for NAD(+). Position 462 is an N6-acetyllysine (K462). K509 bears the N6-acetyllysine; alternate mark. The residue at position 509 (K509) is an N6-succinyllysine; alternate. Position 513 (S513) interacts with substrate. N6-acetyllysine is present on residues K531 and K552.

It belongs to the aldehyde dehydrogenase family. In terms of assembly, homodimer. As to expression, highest expression is found in liver followed by skeletal muscle, kidney, heart, brain, placenta, lung and pancreas.

Its subcellular location is the mitochondrion matrix. The enzyme catalyses L-glutamate 5-semialdehyde + NAD(+) + H2O = L-glutamate + NADH + 2 H(+). It functions in the pathway amino-acid degradation; L-proline degradation into L-glutamate; L-glutamate from L-proline: step 2/2. In terms of biological role, irreversible conversion of delta-1-pyrroline-5-carboxylate (P5C), derived either from proline or ornithine, to glutamate. This is a necessary step in the pathway interconnecting the urea and tricarboxylic acid cycles. The preferred substrate is glutamic gamma-semialdehyde, other substrates include succinic, glutaric and adipic semialdehydes. The chain is Delta-1-pyrroline-5-carboxylate dehydrogenase, mitochondrial (ALDH4A1) from Homo sapiens (Human).